The sequence spans 121 residues: Large ribosomal subunit protein bL12 (121 aa).

The protein belongs to the bacterial ribosomal protein bL12 family. As to quaternary structure, homodimer. Part of the ribosomal stalk of the 50S ribosomal subunit. Forms a multimeric L10(L12)X complex, where L10 forms an elongated spine to which 2 to 4 L12 dimers bind in a sequential fashion. Binds GTP-bound translation factors.

Functionally, forms part of the ribosomal stalk which helps the ribosome interact with GTP-bound translation factors. Is thus essential for accurate translation. This Malacoplasma penetrans (strain HF-2) (Mycoplasma penetrans) protein is Large ribosomal subunit protein bL12.